Reading from the N-terminus, the 151-residue chain is MRVLLQRCYEASVSVEEEVISEIAGGLCLLVGFTHTDTPETVDYMAKKIVGLRIFEDESEKMNISLADRGGAILSVSQFTLYADVSKGKRPSFTKSAPGEKAEALYDLFNQKLADSGIIVETGVFGAMMDVKIVNHGPITIMLDSDEMRSK.

The Gly-cisPro motif, important for rejection of L-amino acids signature appears at 137 to 138 (GP).

The protein belongs to the DTD family. Homodimer.

It localises to the cytoplasm. The enzyme catalyses glycyl-tRNA(Ala) + H2O = tRNA(Ala) + glycine + H(+). The catalysed reaction is a D-aminoacyl-tRNA + H2O = a tRNA + a D-alpha-amino acid + H(+). In terms of biological role, an aminoacyl-tRNA editing enzyme that deacylates mischarged D-aminoacyl-tRNAs. Also deacylates mischarged glycyl-tRNA(Ala), protecting cells against glycine mischarging by AlaRS. Acts via tRNA-based rather than protein-based catalysis; rejects L-amino acids rather than detecting D-amino acids in the active site. By recycling D-aminoacyl-tRNA to D-amino acids and free tRNA molecules, this enzyme counteracts the toxicity associated with the formation of D-aminoacyl-tRNA entities in vivo and helps enforce protein L-homochirality. This chain is D-aminoacyl-tRNA deacylase, found in Listeria monocytogenes serotype 4a (strain HCC23).